The chain runs to 70 residues: Small ribosomal subunit protein bS21 (70 aa).

This sequence belongs to the bacterial ribosomal protein bS21 family.

The protein is Small ribosomal subunit protein bS21 of Helicobacter acinonychis (strain Sheeba).